The primary structure comprises 110 residues: MSDTFQRIAPEQVRQLRENGAQVVDIRDPQSFAVGHISGSRHIDNHSVADFIAAADLDAPLVVVCYHGNSSQSAAAYFIQQGFSDVYSLDGGFELWRSVYPADTSSGEAE.

In terms of domain architecture, Rhodanese spans 17–105; sequence RENGAQVVDI…WRSVYPADTS (89 aa). C65 acts as the Cysteine persulfide intermediate in catalysis.

It belongs to the GlpE family.

It localises to the cytoplasm. The catalysed reaction is thiosulfate + hydrogen cyanide = thiocyanate + sulfite + 2 H(+). The enzyme catalyses thiosulfate + [thioredoxin]-dithiol = [thioredoxin]-disulfide + hydrogen sulfide + sulfite + 2 H(+). Its function is as follows. Transferase that catalyzes the transfer of sulfur from thiosulfate to thiophilic acceptors such as cyanide or dithiols. May function in a CysM-independent thiosulfate assimilation pathway by catalyzing the conversion of thiosulfate to sulfite, which can then be used for L-cysteine biosynthesis. The chain is Thiosulfate sulfurtransferase GlpE from Pseudomonas aeruginosa (strain ATCC 15692 / DSM 22644 / CIP 104116 / JCM 14847 / LMG 12228 / 1C / PRS 101 / PAO1).